The following is a 476-amino-acid chain: Amidophosphoribosyltransferase (476 aa).

The propeptide occupies 1 to 11 (MLAEIKGLNEE). The Nucleophile role is filled by Cys-12. Residues 12–231 (CGVFGIWGHE…PGEMLIINDE (220 aa)) enclose the Glutamine amidotransferase type-2 domain. Cys-247 serves as a coordination point for [4Fe-4S] cluster. Mg(2+)-binding residues include Ser-294, Asp-356, and Asp-357. [4Fe-4S] cluster-binding residues include Cys-393, Cys-448, and Cys-451.

This sequence in the C-terminal section; belongs to the purine/pyrimidine phosphoribosyltransferase family. As to quaternary structure, homotetramer. Requires Mg(2+) as cofactor. The cofactor is [4Fe-4S] cluster.

It carries out the reaction 5-phospho-beta-D-ribosylamine + L-glutamate + diphosphate = 5-phospho-alpha-D-ribose 1-diphosphate + L-glutamine + H2O. The protein operates within purine metabolism; IMP biosynthesis via de novo pathway; N(1)-(5-phospho-D-ribosyl)glycinamide from 5-phospho-alpha-D-ribose 1-diphosphate: step 1/2. Its activity is regulated as follows. Allosterically regulated; subject to end product regulation by purine nucleotides. In terms of biological role, catalyzes the formation of phosphoribosylamine from phosphoribosylpyrophosphate (PRPP) and glutamine. This is Amidophosphoribosyltransferase from Bacillus subtilis (strain 168).